The sequence spans 435 residues: Putative F-box/kelch-repeat protein At1g20790 (435 aa).

Positions 1-49 (MKRLPLHLLDEILFNLDPKSLGKMRCTNKSINTHISDDPNFKFEYFSRI) constitute an F-box domain. Kelch repeat units lie at residues 192 to 238 (PVYV…CTGD) and 280 to 335 (LYWN…LFKP).

This Arabidopsis thaliana (Mouse-ear cress) protein is Putative F-box/kelch-repeat protein At1g20790.